A 226-amino-acid polypeptide reads, in one-letter code: Phosphoribosylformylglycinamidine synthase subunit PurQ (226 aa).

Residues R4 to A226 enclose the Glutamine amidotransferase type-1 domain. The active-site Nucleophile is C87. Catalysis depends on residues H196 and E198.

Part of the FGAM synthase complex composed of 1 PurL, 1 PurQ and 2 PurS subunits.

Its subcellular location is the cytoplasm. The enzyme catalyses N(2)-formyl-N(1)-(5-phospho-beta-D-ribosyl)glycinamide + L-glutamine + ATP + H2O = 2-formamido-N(1)-(5-O-phospho-beta-D-ribosyl)acetamidine + L-glutamate + ADP + phosphate + H(+). It carries out the reaction L-glutamine + H2O = L-glutamate + NH4(+). It participates in purine metabolism; IMP biosynthesis via de novo pathway; 5-amino-1-(5-phospho-D-ribosyl)imidazole from N(2)-formyl-N(1)-(5-phospho-D-ribosyl)glycinamide: step 1/2. Its function is as follows. Part of the phosphoribosylformylglycinamidine synthase complex involved in the purines biosynthetic pathway. Catalyzes the ATP-dependent conversion of formylglycinamide ribonucleotide (FGAR) and glutamine to yield formylglycinamidine ribonucleotide (FGAM) and glutamate. The FGAM synthase complex is composed of three subunits. PurQ produces an ammonia molecule by converting glutamine to glutamate. PurL transfers the ammonia molecule to FGAR to form FGAM in an ATP-dependent manner. PurS interacts with PurQ and PurL and is thought to assist in the transfer of the ammonia molecule from PurQ to PurL. This Streptomyces coelicolor (strain ATCC BAA-471 / A3(2) / M145) protein is Phosphoribosylformylglycinamidine synthase subunit PurQ.